The chain runs to 230 residues: Ribonuclease 3 (230 aa).

An RNase III domain is found at histidine 5–glycine 127. Glutamate 40 provides a ligand contact to Mg(2+). Residue aspartate 44 is part of the active site. The Mg(2+) site is built by aspartate 113 and glutamate 116. Glutamate 116 is a catalytic residue. The 71-residue stretch at aspartate 154–aspartate 224 folds into the DRBM domain. The segment at glycine 202–valine 230 is disordered.

This sequence belongs to the ribonuclease III family. Homodimer. Mg(2+) serves as cofactor.

It is found in the cytoplasm. The enzyme catalyses Endonucleolytic cleavage to 5'-phosphomonoester.. In terms of biological role, digests double-stranded RNA. Involved in the processing of primary rRNA transcript to yield the immediate precursors to the large and small rRNAs (23S and 16S). Processes some mRNAs, and tRNAs when they are encoded in the rRNA operon. Processes pre-crRNA and tracrRNA of type II CRISPR loci if present in the organism. This chain is Ribonuclease 3, found in Methylococcus capsulatus (strain ATCC 33009 / NCIMB 11132 / Bath).